The chain runs to 141 residues: Large ribosomal subunit protein uL23A (141 aa).

A phosphoserine mark is found at Ser68 and Ser70.

It belongs to the universal ribosomal protein uL23 family. In terms of assembly, component of the large ribosomal subunit (LSU). Mature yeast ribosomes consist of a small (40S) and a large (60S) subunit. The 40S small subunit contains 1 molecule of ribosomal RNA (18S rRNA) and at least 33 different proteins. The large 60S subunit contains 3 rRNA molecules (25S, 5.8S and 5S rRNA) and at least 46 different proteins. uL23 is associated with the polypeptide exit tunnel.

It is found in the cytoplasm. Its function is as follows. This protein binds to a specific region on the 26S rRNA. In terms of biological role, component of the ribosome, a large ribonucleoprotein complex responsible for the synthesis of proteins in the cell. The small ribosomal subunit (SSU) binds messenger RNAs (mRNAs) and translates the encoded message by selecting cognate aminoacyl-transfer RNA (tRNA) molecules. The large subunit (LSU) contains the ribosomal catalytic site termed the peptidyl transferase center (PTC), which catalyzes the formation of peptide bonds, thereby polymerizing the amino acids delivered by tRNAs into a polypeptide chain. The nascent polypeptides leave the ribosome through a tunnel in the LSU and interact with protein factors that function in enzymatic processing, targeting, and the membrane insertion of nascent chains at the exit of the ribosomal tunnel. uL23 is a major component of the universal docking site for these factors at the polypeptide exit tunnel. This chain is Large ribosomal subunit protein uL23A (rpl2501), found in Schizosaccharomyces pombe (strain 972 / ATCC 24843) (Fission yeast).